Here is a 186-residue protein sequence, read N- to C-terminus: dCTP deaminase (186 aa).

106 to 111 (KSTYAR) is a binding site for dCTP. Catalysis depends on Glu132, which acts as the Proton donor/acceptor. 3 residues coordinate dCTP: Gln151, Tyr166, and Gln176.

This sequence belongs to the dCTP deaminase family. Homotrimer.

The catalysed reaction is dCTP + H2O + H(+) = dUTP + NH4(+). It participates in pyrimidine metabolism; dUMP biosynthesis; dUMP from dCTP (dUTP route): step 1/2. Catalyzes the deamination of dCTP to dUTP. The polypeptide is dCTP deaminase (Nautilia profundicola (strain ATCC BAA-1463 / DSM 18972 / AmH)).